A 301-amino-acid chain; its full sequence is UDP-3-O-acyl-N-acetylglucosamine deacetylase (301 aa).

Histidine 75, histidine 233, and aspartate 237 together coordinate Zn(2+). Histidine 260 serves as the catalytic Proton donor.

The protein belongs to the LpxC family. The cofactor is Zn(2+).

The enzyme catalyses a UDP-3-O-[(3R)-3-hydroxyacyl]-N-acetyl-alpha-D-glucosamine + H2O = a UDP-3-O-[(3R)-3-hydroxyacyl]-alpha-D-glucosamine + acetate. It participates in glycolipid biosynthesis; lipid IV(A) biosynthesis; lipid IV(A) from (3R)-3-hydroxytetradecanoyl-[acyl-carrier-protein] and UDP-N-acetyl-alpha-D-glucosamine: step 2/6. In terms of biological role, catalyzes the hydrolysis of UDP-3-O-myristoyl-N-acetylglucosamine to form UDP-3-O-myristoylglucosamine and acetate, the committed step in lipid A biosynthesis. In Aliarcobacter butzleri (strain RM4018) (Arcobacter butzleri), this protein is UDP-3-O-acyl-N-acetylglucosamine deacetylase.